The chain runs to 194 residues: HTH-type transcriptional regulator BetI (194 aa).

In terms of domain architecture, HTH tetR-type spans glutamate 8–leucine 68. Positions threonine 31–phenylalanine 50 form a DNA-binding region, H-T-H motif.

The protein operates within amine and polyamine biosynthesis; betaine biosynthesis via choline pathway [regulation]. Repressor involved in the biosynthesis of the osmoprotectant glycine betaine. It represses transcription of the choline transporter BetT and the genes of BetAB involved in the synthesis of glycine betaine. This is HTH-type transcriptional regulator BetI from Burkholderia ambifaria (strain MC40-6).